Here is an 807-residue protein sequence, read N- to C-terminus: Spondin-1 (807 aa).

The N-terminal stretch at 1–28 is a signal peptide; that stretch reads MRLSPVSLRLSRGPALLALALPLAAALA. Residues 29–194 enclose the Reelin domain; the sequence is FSDETLDKVT…DPTLDGVTDR (166 aa). Disulfide bonds link cysteine 44-cysteine 128, cysteine 156-cysteine 182, cysteine 199-cysteine 336, cysteine 200-cysteine 340, cysteine 202-cysteine 415, cysteine 443-cysteine 480, cysteine 454-cysteine 489, cysteine 459-cysteine 494, cysteine 502-cysteine 538, cysteine 513-cysteine 517, cysteine 548-cysteine 554, cysteine 559-cysteine 595, cysteine 570-cysteine 574, cysteine 605-cysteine 610, cysteine 615-cysteine 650, cysteine 626-cysteine 630, and cysteine 660-cysteine 665. The Spondin domain occupies 195 to 388; the sequence is PILDCCACGT…LTSLDHPQSP (194 aa). Asparagine 214 is a glycosylation site (N-linked (GlcNAc...) asparagine). Aspartate 325, aspartate 354, and aspartate 358 together coordinate Ca(2+). TSP type-1 domains lie at 442–495, 501–555, 558–611, 614–666, and 668–721; these read TCIY…PGCS, TCTM…EECS, SCLV…PECH, PCLL…PECP, and DCEL…RKCL. An N-linked (GlcNAc...) asparagine glycan is attached at asparagine 681. Basic and acidic residues predominate over residues 732 to 746; the sequence is REARESRRSEQLREE. A disordered region spans residues 732-752; it reads REARESRRSEQLREESDGEQF. The TSP type-1 6 domain maps to 754–806; it reads GCRMRPWTAWSECTKLCGGGIQERYMTVKKRFKSSQFTSCKDKKEIRACNVHP.

As to quaternary structure, binds to the central extracellular domain of APP and inhibits beta-secretase cleavage of APP.

It localises to the secreted. The protein localises to the extracellular space. It is found in the extracellular matrix. In terms of biological role, cell adhesion protein that promotes the attachment of spinal cord and sensory neuron cells and the outgrowth of neurites in vitro. May contribute to the growth and guidance of axons in both the spinal cord and the PNS. The polypeptide is Spondin-1 (Spon1) (Mus musculus (Mouse)).